The primary structure comprises 130 residues: Prefoldin subunit alpha (130 aa).

This sequence belongs to the prefoldin subunit alpha family. As to quaternary structure, heterohexamer of two alpha and four beta subunits.

The protein resides in the cytoplasm. Molecular chaperone capable of stabilizing a range of proteins. Seems to fulfill an ATP-independent, HSP70-like function in archaeal de novo protein folding. In Thermoplasma acidophilum (strain ATCC 25905 / DSM 1728 / JCM 9062 / NBRC 15155 / AMRC-C165), this protein is Prefoldin subunit alpha (pfdA).